Reading from the N-terminus, the 527-residue chain is Cytokinin dehydrogenase 6 (527 aa).

The first 22 residues, 1 to 22 (MAARCSIAFMVMASCLSVVVSG), serve as a signal peptide directing secretion. Residues 55–236 (VAAAPEAVLH…TRARIGLEPA (182 aa)) enclose the FAD-binding PCMH-type domain. 2 residues coordinate FAD: G91 and G93. Position 94 is a pros-8alpha-FAD histidine (H94). Positions 95 and 99 each coordinate FAD. A glycan (N-linked (GlcNAc...) asparagine) is linked at N121. FAD is bound by residues D160, T165, S171, I175, and I226. 2 N-linked (GlcNAc...) asparagine glycosylation sites follow: N280 and N323. Residues Y475, S510, and Q513 each coordinate FAD.

The protein belongs to the oxygen-dependent FAD-linked oxidoreductase family. As to quaternary structure, monomer. The cofactor is FAD.

Its subcellular location is the secreted. It localises to the extracellular space. The enzyme catalyses N(6)-dimethylallyladenine + A + H2O = 3-methyl-2-butenal + adenine + AH2. Catalyzes the oxidation of cytokinins, a family of N(6)-substituted adenine derivatives that are plant hormones, where the substituent is an isopentenyl group. The polypeptide is Cytokinin dehydrogenase 6 (CKX6) (Oryza sativa subsp. japonica (Rice)).